A 140-amino-acid polypeptide reads, in one-letter code: Small ribosomal subunit protein uS12 (140 aa).

3-methylthioaspartic acid is present on aspartate 102.

It belongs to the universal ribosomal protein uS12 family. As to quaternary structure, part of the 30S ribosomal subunit. Contacts proteins S8 and S17. May interact with IF1 in the 30S initiation complex.

In terms of biological role, with S4 and S5 plays an important role in translational accuracy. Interacts with and stabilizes bases of the 16S rRNA that are involved in tRNA selection in the A site and with the mRNA backbone. Located at the interface of the 30S and 50S subunits, it traverses the body of the 30S subunit contacting proteins on the other side and probably holding the rRNA structure together. The combined cluster of proteins S8, S12 and S17 appears to hold together the shoulder and platform of the 30S subunit. The protein is Small ribosomal subunit protein uS12 of Geobacillus stearothermophilus (Bacillus stearothermophilus).